Here is a 125-residue protein sequence, read N- to C-terminus: Small ribosomal subunit protein uS13 (125 aa).

Residues arginine 92–lysine 125 form a disordered region.

The protein belongs to the universal ribosomal protein uS13 family. Part of the 30S ribosomal subunit. Forms a loose heterodimer with protein S19. Forms two bridges to the 50S subunit in the 70S ribosome.

Functionally, located at the top of the head of the 30S subunit, it contacts several helices of the 16S rRNA. In the 70S ribosome it contacts the 23S rRNA (bridge B1a) and protein L5 of the 50S subunit (bridge B1b), connecting the 2 subunits; these bridges are implicated in subunit movement. Contacts the tRNAs in the A and P-sites. The sequence is that of Small ribosomal subunit protein uS13 from Akkermansia muciniphila (strain ATCC BAA-835 / DSM 22959 / JCM 33894 / BCRC 81048 / CCUG 64013 / CIP 107961 / Muc).